Consider the following 990-residue polypeptide: Translation initiation factor IF-2 (990 aa).

Positions 92–402 are disordered; that stretch reads KKRTFVKRDD…QRDEHLQAAP (311 aa). 2 stretches are compositionally biased toward low complexity: residues 104 to 116 and 131 to 151; these read EGAA…AAFA and EAPA…AAPA. Over residues 158–201 the composition is skewed to basic and acidic residues; it reads ELARREEQARHQAELIRRQEAELAAKRAAREAREKREREAEERA. Residues 223–243 show a composition bias toward low complexity; it reads TREQAAEATARNAAQLQARAK. Residues 244-264 are compositionally biased toward basic and acidic residues; that stretch reads AAAESKARSDEEAARAADLDA. 2 stretches are compositionally biased toward low complexity: residues 281–290 and 318–342; these read ATPKKAVMVA and PAVG…PGAG. Composition is skewed to basic and acidic residues over residues 358 to 368 and 386 to 398; these read PAKKKEIKTRG and RRGD…DEHL. A tr-type G domain is found at 490 to 659; the sequence is PRAPVVTVMG…LLQADVMELK (170 aa). The tract at residues 499-506 is G1; sequence GHVDHGKT. 499 to 506 contacts GTP; sequence GHVDHGKT. The tract at residues 524–528 is G2; it reads GITQH. Residues 545–548 form a G3 region; sequence DTPG. GTP contacts are provided by residues 545–549 and 599–602; these read DTPGH and TKAD. A G4 region spans residues 599 to 602; it reads TKAD. Positions 635–637 are G5; that stretch reads SSK.

This sequence belongs to the TRAFAC class translation factor GTPase superfamily. Classic translation factor GTPase family. IF-2 subfamily.

The protein localises to the cytoplasm. One of the essential components for the initiation of protein synthesis. Protects formylmethionyl-tRNA from spontaneous hydrolysis and promotes its binding to the 30S ribosomal subunits. Also involved in the hydrolysis of GTP during the formation of the 70S ribosomal complex. The protein is Translation initiation factor IF-2 of Verminephrobacter eiseniae (strain EF01-2).